Here is a 442-residue protein sequence, read N- to C-terminus: Hydroxycinnamoyltransferase 2 (442 aa).

Catalysis depends on proton acceptor residues His159 and Asp389.

The protein belongs to the plant acyltransferase family. In terms of tissue distribution, expressed in roots and leaves. Expressed at low levels in stems and seeds.

Its function is as follows. Hydroxycinnamoyl transferase that catalyzes the transfer of an acyl from p-coumaryol-CoA to various acyl acceptors. Can use feruloyl-CoA and caffeoyl-CoA as acyl donors. The chain is Hydroxycinnamoyltransferase 2 from Oryza sativa subsp. japonica (Rice).